A 245-amino-acid chain; its full sequence is Terpene cyclase prhH (245 aa).

Helical transmembrane passes span 17–37, 51–71, 76–96, 113–133, 138–158, 170–190, and 205–225; these read ILAISEVLKVVAAVGWSVNYI, IGILPLCCDIGWEFVYAWMFP, HWQGVVRVWFFLHSAVLLVTL, IVFIYIFVTLVFGAGQYALAA, ALGFHWGGALCQFLSSSCGIA, SYLIWFARAISTFAGFIKLCI, and PMCWFYIVTVLSFDAAYPFLY.

Belongs to the paxB family.

Its subcellular location is the membrane. It participates in secondary metabolite biosynthesis; terpenoid biosynthesis. Its function is as follows. Terpene cyclase; part of the gene cluster that mediates the biosynthesis of paraherquonin, a meroterpenoid with a unique, highly congested hexacyclic molecular architecture. The first step of the pathway is the synthesis of 3,5-dimethylorsellinic acid (DMOA) by the polyketide synthase prhL. Synthesis of DMOA is followed by farnesylation by the prenyltransferase prhE, methylesterification by the methyl-transferase prhM, epoxidation of the prenyl chain by the flavin-dependent monooxygenase prhF, and cyclization of the farnesyl moiety by the terpene cyclase prhH, to yield the tetracyclic intermediate, protoaustinoid A. The short chain dehydrogenase prhI then oxidizes the C-3 alcohol group of the terpene cyclase product to transform protoaustinoid A into protoaustinoid B. The FAD-binding monooxygenase prhJ catalyzes the oxidation of protoaustinoid B into preaustinoid A which is further oxidized into preaustinoid A1 by FAD-binding monooxygenase phrK. Finally, prhA leads to berkeleydione via the berkeleyone B intermediate. PrhA is a multifunctional dioxygenase that first desaturates at C5-C6 to form berkeleyone B, followed by rearrangement of the A/B-ring to form the cycloheptadiene moiety in berkeleydione. Berkeleydione serves as the key intermediate for the biosynthesis of paraherquonin as well as many other meroterpenoids. The cytochrome P450 monooxygenases prhB, prhD, and prhN, as well as the isomerase prhC, are probably involved in the late stage of paraherquonin biosynthesis, after the production of berkeleydione. Especially prhC might be a multifunctional enzyme that catalyzes the D-ring expansion via intramolecular methoxy rearrangement, as well as the hydrolysis of the expanded D-ring. This Penicillium brasilianum protein is Terpene cyclase prhH.